We begin with the raw amino-acid sequence, 119 residues long: Small ribosomal subunit protein uS13 (119 aa).

The interval 96–119 is disordered; that stretch reads PVRGQRTKTNARTRKGPRKLIKSR.

Belongs to the universal ribosomal protein uS13 family. As to quaternary structure, part of the 30S ribosomal subunit. Forms a loose heterodimer with protein S19. Forms two bridges to the 50S subunit in the 70S ribosome.

Functionally, located at the top of the head of the 30S subunit, it contacts several helices of the 16S rRNA. In the 70S ribosome it contacts the 23S rRNA (bridge B1a) and protein L5 of the 50S subunit (bridge B1b), connecting the 2 subunits; these bridges are implicated in subunit movement. Contacts the tRNAs in the A and P-sites. This chain is Small ribosomal subunit protein uS13, found in Buchnera aphidicola subsp. Cinara cedri (strain Cc).